The sequence spans 638 residues: Chaperone protein DnaK (638 aa).

At threonine 198 the chain carries Phosphothreonine; by autocatalysis. Residues 602 to 638 (QAKSQAQGGEEAQAKDAGQSNDDVVDAEFEEVKDDKK) form a disordered region. The segment covering 624–638 (DVVDAEFEEVKDDKK) has biased composition (acidic residues).

The protein belongs to the heat shock protein 70 family.

In terms of biological role, acts as a chaperone. The polypeptide is Chaperone protein DnaK (Shewanella denitrificans (strain OS217 / ATCC BAA-1090 / DSM 15013)).